The chain runs to 908 residues: Alanine--tRNA ligase (908 aa).

Zn(2+)-binding residues include His596, His600, Cys698, and His702.

The protein belongs to the class-II aminoacyl-tRNA synthetase family. Requires Zn(2+) as cofactor.

The protein localises to the cytoplasm. It catalyses the reaction tRNA(Ala) + L-alanine + ATP = L-alanyl-tRNA(Ala) + AMP + diphosphate. Catalyzes the attachment of alanine to tRNA(Ala) in a two-step reaction: alanine is first activated by ATP to form Ala-AMP and then transferred to the acceptor end of tRNA(Ala). Also edits incorrectly charged Ser-tRNA(Ala) and Gly-tRNA(Ala) via its editing domain. The protein is Alanine--tRNA ligase of Lysinibacillus sphaericus (strain C3-41).